The following is a 290-amino-acid chain: tRNA dimethylallyltransferase (290 aa).

11-18 contacts ATP; the sequence is GPTASGKS. 13 to 18 lines the substrate pocket; sequence TASGKS. Interaction with substrate tRNA regions lie at residues 36–39 and 158–162; these read DSMQ and QRIVR.

The protein belongs to the IPP transferase family. As to quaternary structure, monomer. The cofactor is Mg(2+).

The catalysed reaction is adenosine(37) in tRNA + dimethylallyl diphosphate = N(6)-dimethylallyladenosine(37) in tRNA + diphosphate. In terms of biological role, catalyzes the transfer of a dimethylallyl group onto the adenine at position 37 in tRNAs that read codons beginning with uridine, leading to the formation of N6-(dimethylallyl)adenosine (i(6)A). The chain is tRNA dimethylallyltransferase from Bartonella henselae (strain ATCC 49882 / DSM 28221 / CCUG 30454 / Houston 1) (Rochalimaea henselae).